The primary structure comprises 484 residues: Glutamyl-tRNA(Gln) amidotransferase subunit A (484 aa).

Residues Lys-76 and Ser-151 each act as charge relay system in the active site. The active-site Acyl-ester intermediate is Ser-175.

This sequence belongs to the amidase family. GatA subfamily. In terms of assembly, heterotrimer of A, B and C subunits.

The enzyme catalyses L-glutamyl-tRNA(Gln) + L-glutamine + ATP + H2O = L-glutaminyl-tRNA(Gln) + L-glutamate + ADP + phosphate + H(+). In terms of biological role, allows the formation of correctly charged Gln-tRNA(Gln) through the transamidation of misacylated Glu-tRNA(Gln) in organisms which lack glutaminyl-tRNA synthetase. The reaction takes place in the presence of glutamine and ATP through an activated gamma-phospho-Glu-tRNA(Gln). This is Glutamyl-tRNA(Gln) amidotransferase subunit A from Thioalkalivibrio sulfidiphilus (strain HL-EbGR7).